The following is a 113-amino-acid chain: Tubulin alpha chain (113 aa).

Position 52 (Glu52) interacts with GTP. Mg(2+) is bound at residue Glu52.

This sequence belongs to the tubulin family. As to quaternary structure, dimer of alpha and beta chains. A typical microtubule is a hollow water-filled tube with an outer diameter of 25 nm and an inner diameter of 15 nM. Alpha-beta heterodimers associate head-to-tail to form protofilaments running lengthwise along the microtubule wall with the beta-tubulin subunit facing the microtubule plus end conferring a structural polarity. Microtubules usually have 13 protofilaments but different protofilament numbers can be found in some organisms and specialized cells. It depends on Mg(2+) as a cofactor.

It is found in the cytoplasm. Its subcellular location is the cytoskeleton. It catalyses the reaction GTP + H2O = GDP + phosphate + H(+). Tubulin is the major constituent of microtubules, a cylinder consisting of laterally associated linear protofilaments composed of alpha- and beta-tubulin heterodimers. Microtubules grow by the addition of GTP-tubulin dimers to the microtubule end, where a stabilizing cap forms. Below the cap, tubulin dimers are in GDP-bound state, owing to GTPase activity of alpha-tubulin. This chain is Tubulin alpha chain (TUBA), found in Picea abies (Norway spruce).